Consider the following 206-residue polypeptide: dTTP/UTP pyrophosphatase (206 aa).

Residue Asp87 is the Proton acceptor of the active site.

This sequence belongs to the Maf family. YhdE subfamily. A divalent metal cation serves as cofactor.

The protein localises to the cytoplasm. The enzyme catalyses dTTP + H2O = dTMP + diphosphate + H(+). The catalysed reaction is UTP + H2O = UMP + diphosphate + H(+). Functionally, nucleoside triphosphate pyrophosphatase that hydrolyzes dTTP and UTP. May have a dual role in cell division arrest and in preventing the incorporation of modified nucleotides into cellular nucleic acids. This is dTTP/UTP pyrophosphatase from Aromatoleum aromaticum (strain DSM 19018 / LMG 30748 / EbN1) (Azoarcus sp. (strain EbN1)).